The sequence spans 468 residues: Chromatin assembly factor 1 subunit B (468 aa).

WD repeat units follow at residues His-11–Asn-52, His-69–Glu-108, Thr-143–Gly-182, Asp-185–Val-224, and Ile-371–Glu-413.

The protein belongs to the WD repeat HIR1 family. As to quaternary structure, component of chromatin assembly factor 1 (CAF-1), composed of MSI1/p50, CAC2/p60 and CAC1/p90. Interacts with RTT106.

The protein localises to the nucleus. Functionally, acts as a component of the histone chaperone complex chromatin assembly factor 1 (CAF-1), which assembles histone octamers onto replicating DNA. It performs the first step of the nucleosome assembly process, bringing newly synthesized histones H3 and H4 to replicating DNA; histones H2A/H2B can bind to this chromatin precursor subsequent to DNA replication to complete the histone octamer. Plays a role in the maintenance of heterochromatin. The protein is Chromatin assembly factor 1 subunit B (CAC2) of Saccharomyces cerevisiae (strain ATCC 204508 / S288c) (Baker's yeast).